A 127-amino-acid polypeptide reads, in one-letter code: Aspartate 1-decarboxylase (127 aa).

The Schiff-base intermediate with substrate; via pyruvic acid role is filled by Ser-25. Pyruvic acid (Ser) is present on Ser-25. Residue Thr-57 coordinates substrate. Tyr-58 acts as the Proton donor in catalysis. Position 73-75 (73-75 (GAA)) interacts with substrate.

The protein belongs to the PanD family. Heterooctamer of four alpha and four beta subunits. Pyruvate serves as cofactor. Is synthesized initially as an inactive proenzyme, which is activated by self-cleavage at a specific serine bond to produce a beta-subunit with a hydroxyl group at its C-terminus and an alpha-subunit with a pyruvoyl group at its N-terminus.

The protein resides in the cytoplasm. The catalysed reaction is L-aspartate + H(+) = beta-alanine + CO2. It functions in the pathway cofactor biosynthesis; (R)-pantothenate biosynthesis; beta-alanine from L-aspartate: step 1/1. Catalyzes the pyruvoyl-dependent decarboxylation of aspartate to produce beta-alanine. This is Aspartate 1-decarboxylase from Bacillus cereus (strain G9842).